The chain runs to 451 residues: MDGNDHKVENLGDVDKFYSRIRWNNQFSYMATLPPHLQSEMEGQKSLLMRYDTYRKESSSFSGEGKKVTLQHVPTDFSEASQAVISKKDHDTHASAFVNKIFQPEVAEELIVNRYEKLLSQRPEWHAPWKLSRVINGHLGWVRCVAIDPVDNEWFITGSNDTTMKVWDLATGKLKTTLAGHVMTVRDVAVSDRHPYLFSVSEDKTVKCWDLEKNQIIRDYYGHLSGVRTVSIHPTLDLIATAGRDSVIKLWDMRTRIPVITLVGHKGPINQVQCTPVDPQVVSSSTDATVRLWDVVAGKTMKVLTHHKRSVRATALHPKEFSVASACTDDIRSWGLAEGSLLTNFESEKTGIINTLSINQDDVLFAGGDNGVLSFYDYKSGHKYQSLATREMVGSLEGERSVLCSTFDKTGLRLITGEADKSIKIWKQDETATKESEPGLAWNPNLSAKRF.

7 WD repeats span residues 137 to 168, 180 to 210, 222 to 252, 264 to 294, 306 to 335, 348 to 377, and 397 to 427; these read GHLGWVRCVAIDPVDNEWFITGSNDTTMKVWD, GHVMTVRDVAVSDRHPYLFSVSEDKTVKCWD, GHLSGVRTVSIHPTLDLIATAGRDSVIKLWD, GHKGPINQVQCTPVDPQVVSSSTDATVRLWD, HHKRSVRATALHPKEFSVASACTDDIRSWG, EKTGIINTLSINQDDVLFAGGDNGVLSFYD, and EGERSVLCSTFDKTGLRLITGEADKSIKIWK.

This sequence belongs to the WD repeat PRL1/PRL2 family. In terms of assembly, belongs to the CWC complex (or CEF1-associated complex), a spliceosome subcomplex composed of the U2, U5 and U6 snRNAs and at least BUD13, BUD31, BRR2, CDC40, CEF1, CLF1, CUS1, CWC2, CWC15, CWC21, CWC22, CWC23, CWC24, CWC25, CWC27, ECM2, HSH155, IST3, ISY1, LEA1, MSL1, NTC20, PRP8, PRP9, PRP11, PRP19, PRP21, PRP22, PRP45, PRP46, SLU7, SMB1, SMD1, SMD2, SMD3, SMX2, SMX3, SNT309, SNU114, SPP2, SYF1, SYF2, RSE1 and YJU2. Interacts with CEF1, CLF1, NTC20, PRP45 and SYF1.

The protein localises to the cytoplasm. The protein resides in the nucleus. Functionally, involved in pre-mRNA splicing. May also be required for cell cycle progression at G2/M. The chain is Pre-mRNA-splicing factor PRP46 (PRP46) from Saccharomyces cerevisiae (strain ATCC 204508 / S288c) (Baker's yeast).